A 125-amino-acid polypeptide reads, in one-letter code: Secreted RxLR effector protein 55 (125 aa).

The signal sequence occupies residues Met-1–Gly-21. The short motif at Arg-35–Arg-38 is the RxLR element. The span at Glu-51–Ser-87 shows a compositional bias: low complexity. Residues Glu-51–Met-96 are disordered. A glycan (N-linked (GlcNAc...) asparagine) is linked at Asn-74. The chain crosses the membrane as a helical span at residues Phe-99–Phe-119.

The protein belongs to the RxLR effector family.

The protein resides in the secreted. Its subcellular location is the host cell membrane. Functionally, effector that acts as a broad suppressor of cell death to interrupt plant immunity. Inhibits cell death induced by cell death-inducing proteins, including the PAMP elicitor INF1 from P.infestans. This Plasmopara viticola (Downy mildew of grapevine) protein is Secreted RxLR effector protein 55.